A 201-amino-acid chain; its full sequence is DeSI-like protein sdu1 (201 aa).

A PPPDE domain is found at 1 to 143 (MKVYINVYDL…AFPTITNALL (143 aa)). Active-site residues include His29 and Cys105. The segment at 146–201 (GQKNTSDVDDSSDSSSDVDEETLIVSKSKKAHKDIPKFSAPPPSADLNNLITDSLP) is disordered. A compositionally biased stretch (acidic residues) spans 152 to 167 (DVDDSSDSSSDVDEET). The segment covering 191-201 (DLNNLITDSLP) has biased composition (polar residues).

This sequence belongs to the DeSI family.

The protein resides in the cytoplasm. In terms of biological role, has a role in meiosis. This is DeSI-like protein sdu1 (sdu1) from Schizosaccharomyces pombe (strain 972 / ATCC 24843) (Fission yeast).